The sequence spans 161 residues: Nucleotide-binding protein BTH_I0730 (161 aa).

The protein belongs to the YajQ family.

Functionally, nucleotide-binding protein. This is Nucleotide-binding protein BTH_I0730 from Burkholderia thailandensis (strain ATCC 700388 / DSM 13276 / CCUG 48851 / CIP 106301 / E264).